The following is a 264-amino-acid chain: Probable BRI1 kinase inhibitor 1 (264 aa).

2 disordered regions span residues 1–146 (MTMN…GLDV) and 165–240 (FSRH…SEES). The segment covering 9–30 (RSQPPPPHPPLFKPTTPPPPPL) has biased composition (pro residues). Positions 31-40 (LSTSTSTSPP) are enriched in low complexity. Polar residues predominate over residues 77-97 (LSHNNYSSKANQHRQTGSSSS). Residues 98–107 (SKEKDREYKA) show a composition bias toward basic and acidic residues. Composition is skewed to low complexity over residues 208–219 (LSSAPASLRASP) and 227–239 (VGGS…SSEE).

In terms of assembly, interacts with BRI1. Post-translationally, phosphorylated by BRI1.

Its function is as follows. Negative regulator of brassinosteroid signaling. The chain is Probable BRI1 kinase inhibitor 1 (BKI1) from Oryza sativa subsp. japonica (Rice).